The chain runs to 81 residues: MQPLQILSIVALVVAAIIAIVVWSIVFILIRKILRQRKIDRLIDRIRERAEDSGNESEGIRKELSALVEMGHDAPGDIDDL.

Over 1-7 (MQPLQIL) the chain is Extracellular. A helical membrane pass occupies residues 8-28 (SIVALVVAAIIAIVVWSIVFI). The Cytoplasmic segment spans residues 29–81 (LIRKILRQRKIDRLIDRIRERAEDSGNESEGIRKELSALVEMGHDAPGDIDDL). A phosphoserine; by host CK2 mark is found at Ser-53 and Ser-57.

The protein belongs to the HIV-1 VPU protein family. Homopentamer. Interacts with host CD4 and BRTC; these interactions induce proteasomal degradation of CD4. Interacts with host BST2; this interaction leads to the degradation of host BST2. Interacts with host FBXW11. Interacts with host AP1M1; this interaction plays a role in the mistrafficking and subsequent degradation of host BST2. Interacts with host RANBP2; this interaction allows Vpu to down-regulate host BLM sumoylation. Phosphorylated by host CK2. This phosphorylation is necessary for interaction with human BTRC and degradation of CD4.

It is found in the host membrane. With respect to regulation, ion channel activity is inhibited by hexamethylene amiloride in vitro. Enhances virion budding by targeting host CD4 and Tetherin/BST2 to proteasome degradation. Degradation of CD4 prevents any unwanted premature interactions between viral Env and its host receptor CD4 in the endoplasmic reticulum. Degradation of antiretroviral protein Tetherin/BST2 is important for virion budding, as BST2 tethers new viral particles to the host cell membrane. Mechanistically, Vpu bridges either CD4 or BST2 to BTRC, a substrate recognition subunit of the Skp1/Cullin/F-box protein E3 ubiquitin ligase, induces their ubiquitination and subsequent proteasomal degradation. The alteration of the E3 ligase specificity by Vpu seems to promote the degradation of host IKBKB, leading to NF-kappa-B down-regulation and subsequent apoptosis. Acts as a viroporin that forms an oligomeric ion channel in membranes. Modulates the host DNA repair mechanisms to promote degradation of nuclear viral cDNA in cells that are already productively infected in order to suppress immune sensing and proviral hyper-integration (superinfection). Manipulates PML-NBs and modulates SUMOylation of host BLM protein thereby enhancing its DNA-end processing activity toward viral unintegrated linear DNA. Also inhibits RAD52-mediated homologous repair of viral cDNA, preventing the generation of dead-end circular forms of single copies of the long terminal repeat and permitting sustained nucleolytic attack. The chain is Protein Vpu from Homo sapiens (Human).